A 469-amino-acid chain; its full sequence is Neuraminidase (469 aa).

Residues 1-6 are Intravirion-facing; the sequence is MNTNQR. The chain crosses the membrane as a helical span at residues 7-27; sequence IITIGTICLIVGIISLLLQIG. Residues 11-33 are involved in apical transport and lipid raft association; sequence GTICLIVGIISLLLQIGNIISLW. Residues 28 to 469 are Virion surface-facing; sequence NIISLWISHS…GADLPFTIDK (442 aa). Positions 36–90 are hypervariable stalk region; the sequence is HSIQTREKSHPEVCNQSIITYENNTWVNQTYVNISNANIVAEQGVTSIILAGNSS. Residues Asn50, Asn58, Asn63, Asn68, and Asn88 are each glycosylated (N-linked (GlcNAc...) asparagine; by host). Residues 91–469 are head of neuraminidase; that stretch reads LCPISGWAIY…GADLPFTIDK (379 aa). Intrachain disulfides connect Cys92/Cys417, Cys124/Cys129, Cys184/Cys231, Cys233/Cys238, Cys279/Cys292, Cys281/Cys290, Cys318/Cys335, and Cys421/Cys446. A substrate-binding site is contributed by Arg118. An N-linked (GlcNAc...) asparagine; by host glycan is attached at Asn146. Catalysis depends on Asp151, which acts as the Proton donor/acceptor. Arg152 lines the substrate pocket. Asn235 carries N-linked (GlcNAc...) asparagine; by host glycosylation. 277-278 is a substrate binding site; sequence EE. Arg293 provides a ligand contact to substrate. Ca(2+) is bound by residues Asp294, Asp324, and Asn344. Arg368 contacts substrate. The active-site Nucleophile is the Tyr402. N-linked (GlcNAc...) asparagine; by host glycosylation is present at Asn454.

This sequence belongs to the glycosyl hydrolase 34 family. In terms of assembly, homotetramer. It depends on Ca(2+) as a cofactor. Post-translationally, N-glycosylated.

It is found in the virion membrane. It localises to the host apical cell membrane. It carries out the reaction Hydrolysis of alpha-(2-&gt;3)-, alpha-(2-&gt;6)-, alpha-(2-&gt;8)- glycosidic linkages of terminal sialic acid residues in oligosaccharides, glycoproteins, glycolipids, colominic acid and synthetic substrates.. With respect to regulation, inhibited by the neuraminidase inhibitors zanamivir (Relenza) and oseltamivir (Tamiflu). These drugs interfere with the release of progeny virus from infected cells and are effective against all influenza strains. Resistance to neuraminidase inhibitors is quite rare. Functionally, catalyzes the removal of terminal sialic acid residues from viral and cellular glycoconjugates. Cleaves off the terminal sialic acids on the glycosylated HA during virus budding to facilitate virus release. Additionally helps virus spread through the circulation by further removing sialic acids from the cell surface. These cleavages prevent self-aggregation and ensure the efficient spread of the progeny virus from cell to cell. Otherwise, infection would be limited to one round of replication. Described as a receptor-destroying enzyme because it cleaves a terminal sialic acid from the cellular receptors. May facilitate viral invasion of the upper airways by cleaving the sialic acid moieties on the mucin of the airway epithelial cells. Likely to plays a role in the budding process through its association with lipid rafts during intracellular transport. May additionally display a raft-association independent effect on budding. Plays a role in the determination of host range restriction on replication and virulence. Sialidase activity in late endosome/lysosome traffic seems to enhance virus replication. The sequence is that of Neuraminidase from Aves (Human).